Reading from the N-terminus, the 257-residue chain is Imidazole glycerol phosphate synthase subunit HisF (257 aa).

Residues Asp11 and Asp130 contribute to the active site.

It belongs to the HisA/HisF family. As to quaternary structure, heterodimer of HisH and HisF.

Its subcellular location is the cytoplasm. It catalyses the reaction 5-[(5-phospho-1-deoxy-D-ribulos-1-ylimino)methylamino]-1-(5-phospho-beta-D-ribosyl)imidazole-4-carboxamide + L-glutamine = D-erythro-1-(imidazol-4-yl)glycerol 3-phosphate + 5-amino-1-(5-phospho-beta-D-ribosyl)imidazole-4-carboxamide + L-glutamate + H(+). It participates in amino-acid biosynthesis; L-histidine biosynthesis; L-histidine from 5-phospho-alpha-D-ribose 1-diphosphate: step 5/9. In terms of biological role, IGPS catalyzes the conversion of PRFAR and glutamine to IGP, AICAR and glutamate. The HisF subunit catalyzes the cyclization activity that produces IGP and AICAR from PRFAR using the ammonia provided by the HisH subunit. This chain is Imidazole glycerol phosphate synthase subunit HisF, found in Vibrio parahaemolyticus serotype O3:K6 (strain RIMD 2210633).